The primary structure comprises 324 residues: 2-dehydro-3-deoxygluconokinase (324 aa).

Substrate is bound by residues 35–39, 106–108, and Arg-170; these read GAESN and YYR. ATP contacts are provided by residues 168-170, 228-233, and 258-261; these read NVR, KLGKEG, and GAGD. Substrate-binding residues include Asp-261 and Asp-297. Asp-261 acts as the Proton acceptor in catalysis.

Belongs to the carbohydrate kinase PfkB family.

It carries out the reaction 2-dehydro-3-deoxy-D-gluconate + ATP = 2-dehydro-3-deoxy-6-phospho-D-gluconate + ADP + H(+). The protein operates within carbohydrate acid metabolism; 2-dehydro-3-deoxy-D-gluconate degradation; D-glyceraldehyde 3-phosphate and pyruvate from 2-dehydro-3-deoxy-D-gluconate: step 1/2. Its function is as follows. Catalyzes the phosphorylation of 2-keto-3-deoxygluconate (KDG) to produce 2-keto-3-deoxy-6-phosphogluconate (KDPG). The chain is 2-dehydro-3-deoxygluconokinase (kdgK) from Bacillus subtilis (strain 168).